A 662-amino-acid chain; its full sequence is UvrABC system protein B (662 aa).

Residues 31–188 (DNIEGGEKAQ…NDLVDIQFER (158 aa)) form the Helicase ATP-binding domain. 44-51 (GATGTGKT) is an ATP binding site. A Beta-hairpin motif is present at residues 97–120 (YYDYYQPEAYVPSSDTYIEKDSSV). The Helicase C-terminal domain maps to 435-601 (QIDDLLGEIN…TIKKEIRDLI (167 aa)). In terms of domain architecture, UVR spans 626–661 (KDMIKKLEGQMQEAAGLLDFELAAQIRDMILEIKAM).

It belongs to the UvrB family. Forms a heterotetramer with UvrA during the search for lesions. Interacts with UvrC in an incision complex.

It localises to the cytoplasm. The UvrABC repair system catalyzes the recognition and processing of DNA lesions. A damage recognition complex composed of 2 UvrA and 2 UvrB subunits scans DNA for abnormalities. Upon binding of the UvrA(2)B(2) complex to a putative damaged site, the DNA wraps around one UvrB monomer. DNA wrap is dependent on ATP binding by UvrB and probably causes local melting of the DNA helix, facilitating insertion of UvrB beta-hairpin between the DNA strands. Then UvrB probes one DNA strand for the presence of a lesion. If a lesion is found the UvrA subunits dissociate and the UvrB-DNA preincision complex is formed. This complex is subsequently bound by UvrC and the second UvrB is released. If no lesion is found, the DNA wraps around the other UvrB subunit that will check the other stand for damage. The sequence is that of UvrABC system protein B from Streptococcus sanguinis (strain SK36).